The following is a 991-amino-acid chain: Ribonuclease TUDOR 1 (991 aa).

N-acetylalanine is present on Ala-2. TNase-like domains lie at Gln-8–Lys-151, Lys-186–Asn-364, Gln-378–Ala-557, and Arg-587–Asn-714. The segment at Arg-227 to Arg-250 is disordered. The Tudor domain occupies Asn-782–Ala-847. Tyr-970 bears the Phosphotyrosine mark. The tract at residues Gly-971–Arg-991 is disordered. At Ser-975 the chain carries Phosphoserine. Residue Thr-980 is modified to Phosphothreonine.

In terms of tissue distribution, expressed in seeds, leaves, flowers, roots and siliques (at protein level). Accumulates in the cap and elongation zone of the root apices (at protein level).

The protein resides in the cytoplasm. The protein localises to the cytoplasmic granule. It is found in the perinuclear region. Its subcellular location is the endoplasmic reticulum. Repressed by the specific inhibitor 3',5'-deoxythymidine bisphosphate (pdTp); this RNase activity inhibition impairs subcellular relocation upon abiotic stress and leads to reduced stress resistance. Functionally, cytoprotective ribonuclease (RNase) required for resistance to abiotic stresses, acting as a positive regulator of mRNA decapping during stress. Essential for the integrity and function of cytoplasmic messenger ribonucleoprotein (mRNP) complexes called stress granules (SGs) and processing bodies (PBs), sites of post-transcriptional gene regulation during stress (e.g. salt and heat). Involved in gibberellic acid (GA) biosynthesis. Essential for stress tolerance, probably by regulating mRNAs entering the secretory pathway. Component of stress granules (SGs) that regulates growth under salt stress by modulating levels of GA20OX3 mRNA. Binds GA20OX3 mRNA. May inhibit the degradation of mRNAs involved in stress adaptation. This Arabidopsis thaliana (Mouse-ear cress) protein is Ribonuclease TUDOR 1.